The sequence spans 282 residues: Phosphate import ATP-binding protein PstB (282 aa).

Over residues 1 to 10 the composition is skewed to basic and acidic residues; it reads MNMAESHLDP. Residues 1 to 24 are disordered; it reads MNMAESHLDPSKLATGPAGAGAAT. Over residues 14 to 24 the composition is skewed to low complexity; sequence ATGPAGAGAAT. In terms of domain architecture, ABC transporter spans 36 to 277; that stretch reads IEVKNLNFFY…PARKETEDYI (242 aa). 68 to 75 is a binding site for ATP; that stretch reads GPSGCGKS.

Belongs to the ABC transporter superfamily. Phosphate importer (TC 3.A.1.7) family. The complex is composed of two ATP-binding proteins (PstB), two transmembrane proteins (PstC and PstA) and a solute-binding protein (PstS).

It is found in the cell inner membrane. It carries out the reaction phosphate(out) + ATP + H2O = ADP + 2 phosphate(in) + H(+). Its function is as follows. Part of the ABC transporter complex PstSACB involved in phosphate import. Responsible for energy coupling to the transport system. The protein is Phosphate import ATP-binding protein PstB of Burkholderia thailandensis (strain ATCC 700388 / DSM 13276 / CCUG 48851 / CIP 106301 / E264).